The chain runs to 523 residues: Rho guanine nucleotide exchange factor 8 (523 aa).

Positions 44–57 (VESNTPESQNSDSF) are enriched in polar residues. Disordered stretches follow at residues 44 to 83 (VESN…ERQQ) and 442 to 523 (ETSD…KDRH). The region spanning 76-440 (GKRSERQQAD…TLALKQTLLA (365 aa)) is the PRONE domain. The span at 465–475 (EAEKHDPHSKT) shows a compositional bias: basic and acidic residues.

In terms of assembly, homodimer. The homodimer interacts with ARAC5/ROP4. Interacts with ARAC11/ROP1 and ARAC10/ROP11. Interacts with PRK6. As to expression, expressed in pollen grains and pollen tubes.

It localises to the cell membrane. Its function is as follows. Guanine-nucleotide exchange factor (GEF) that acts as an activator of Rop (Rho of plants) GTPases by promoting the exchange of GDP for GTP. Active as homodimer. The sequence is that of Rho guanine nucleotide exchange factor 8 from Arabidopsis thaliana (Mouse-ear cress).